Reading from the N-terminus, the 342-residue chain is Spermidine synthase (342 aa).

The disordered stretch occupies residues methionine 9–glutamate 42. The PABS domain maps to proline 52 to threonine 289. Glutamine 83 is an S-adenosyl 3-(methylsulfanyl)propylamine binding site. Tyrosine 113 contributes to the putrescine binding site. Residues glutamine 114, aspartate 138, glutamate 158, aspartate 189–glycine 190, and aspartate 208 each bind S-adenosyl 3-(methylsulfanyl)propylamine. The Proton acceptor role is filled by aspartate 208. Putrescine contacts are provided by residues aspartate 208–aspartate 211 and tyrosine 277.

Belongs to the spermidine/spermine synthase family.

It carries out the reaction S-adenosyl 3-(methylsulfanyl)propylamine + putrescine = S-methyl-5'-thioadenosine + spermidine + H(+). It functions in the pathway amine and polyamine biosynthesis; spermidine biosynthesis; spermidine from putrescine: step 1/1. This Solanum lycopersicum (Tomato) protein is Spermidine synthase (SPDSYN).